The following is a 154-amino-acid chain: Ribosome maturation factor RimP (154 aa).

This sequence belongs to the RimP family.

It is found in the cytoplasm. In terms of biological role, required for maturation of 30S ribosomal subunits. This chain is Ribosome maturation factor RimP, found in Carboxydothermus hydrogenoformans (strain ATCC BAA-161 / DSM 6008 / Z-2901).